An 825-amino-acid polypeptide reads, in one-letter code: NT-3 growth factor receptor (825 aa).

Positions methionine 1–alanine 31 are cleaved as a signal peptide. 2 cysteine pairs are disulfide-bonded: cysteine 32–cysteine 38 and cysteine 36–cysteine 45. Residues cysteine 32–threonine 429 lie on the Extracellular side of the membrane. 3 N-linked (GlcNAc...) asparagine glycosylation sites follow: asparagine 68, asparagine 72, and asparagine 79. 2 LRR repeats span residues glycine 104–lysine 125 and histidine 128–threonine 149. N-linked (GlcNAc...) asparagine glycosylation is found at asparagine 133 and asparagine 163. The region spanning asparagine 160–leucine 209 is the LRRCT domain. 2 disulfides stabilise this stretch: cysteine 164–cysteine 189 and cysteine 166–cysteine 207. 7 N-linked (GlcNAc...) asparagine glycosylation sites follow: asparagine 203, asparagine 218, asparagine 232, asparagine 259, asparagine 267, asparagine 272, and asparagine 294. Ig-like C2-type domains follow at residues proline 210–threonine 300 and serine 309–asparagine 382. An intrachain disulfide couples cysteine 231 to cysteine 284. Cysteine 320 and cysteine 362 are disulfide-bonded. N-linked (GlcNAc...) asparagine glycosylation is found at asparagine 375 and asparagine 388. A helical transmembrane segment spans residues phenylalanine 430–isoleucine 453. Over asparagine 454 to glycine 825 the chain is Cytoplasmic. At serine 493 the chain carries Phosphoserine. Position 516 is a phosphotyrosine; by autocatalysis (tyrosine 516). One can recognise a Protein kinase domain in the interval isoleucine 538–glycine 825. Residues leucine 544–valine 552 and lysine 572 each bind ATP. Residue aspartate 679 is the Proton acceptor of the active site. 3 positions are modified to phosphotyrosine; by autocatalysis: tyrosine 705, tyrosine 709, and tyrosine 710.

The protein belongs to the protein kinase superfamily. Tyr protein kinase family. Insulin receptor subfamily. Exists in a dynamic equilibrium between monomeric (low affinity) and dimeric (high affinity) structures. Binds SH2B2. Interacts with SQSTM1 and KIDINS220. Interacts with PTPRS. Interacts with MAPK8IP3/JIP3. Post-translationally, ligand-mediated auto-phosphorylation.

Its subcellular location is the membrane. It carries out the reaction L-tyrosyl-[protein] + ATP = O-phospho-L-tyrosyl-[protein] + ADP + H(+). Its function is as follows. Receptor tyrosine kinase involved in nervous system and probably heart development. Upon binding of its ligand NTF3/neurotrophin-3, NTRK3 autophosphorylates and activates different signaling pathways, including the phosphatidylinositol 3-kinase/AKT and the MAPK pathways, that control cell survival and differentiation. In Macaca fascicularis (Crab-eating macaque), this protein is NT-3 growth factor receptor (NTRK3).